A 117-amino-acid chain; its full sequence is Large ribosomal subunit protein uL18 (117 aa).

Belongs to the universal ribosomal protein uL18 family. In terms of assembly, part of the 50S ribosomal subunit; part of the 5S rRNA/L5/L18/L25 subcomplex. Contacts the 5S and 23S rRNAs.

In terms of biological role, this is one of the proteins that bind and probably mediate the attachment of the 5S RNA into the large ribosomal subunit, where it forms part of the central protuberance. The polypeptide is Large ribosomal subunit protein uL18 (Photobacterium profundum (strain SS9)).